Here is a 509-residue protein sequence, read N- to C-terminus: MPSGFQQIGSDDGEPPRQRVTGTLVLAVFSAVLGSLQFGYNIGVINAPQKVIEQSYNATWLGRQGPGGPDSIPQGTLTTLWALSVAIFSVGGMISSFLIGIISQWLGRKRAMLANNVLAVLGGALMGLANAAASYEILILGRFLIGAYSGLTSGLVPMYVGEIAPTHLRGALGTLNQLAIVIGILVAQVLGLESMLGTATLWPLLLALTVLPALLQLILLPFCPESPRYLYIIRNLEGPARKSLKRLTGWADVSDALAELKDEKRKLERERPMSLLQLLGSRTHRQPLIIAVVLQLSQQLSGINAVFYYSTSIFESAGVGQPAYATIGAGVVNTVFTLVSVLLVERAGRRTLHLLGLAGMCGCAILMTVALLLLERVPAMSYVSIVAIFGFVAFFEIGPGPIPWFIVAELFSQGPRPAAMAVAGFSNWTCNFIVGMGFQYVADAMGPYVFLLFAVLLLGFFIFTFLKVPETRGRTFDQISAAFRRTPSLLEQEVKPSTELEYLGPDEND.

Residues 1–23 lie on the Cytoplasmic side of the membrane; the sequence is MPSGFQQIGSDDGEPPRQRVTGT. An interaction with SRFBP1 region spans residues 7–13; sequence QIGSDDG. Phosphoserine is present on serine 10. A helical membrane pass occupies residues 24–44; sequence LVLAVFSAVLGSLQFGYNIGV. At 45–80 the chain is on the extracellular side; sequence INAPQKVIEQSYNATWLGRQGPGGPDSIPQGTLTTL. Residue asparagine 57 is glycosylated (N-linked (GlcNAc...) asparagine). The chain crosses the membrane as a helical span at residues 81 to 101; the sequence is WALSVAIFSVGGMISSFLIGI. The Cytoplasmic segment spans residues 102–110; sequence ISQWLGRKR. Residues 111-131 traverse the membrane as a helical segment; sequence AMLANNVLAVLGGALMGLANA. Residues 132–141 are Extracellular-facing; the sequence is AASYEILILG. A helical transmembrane segment spans residues 142 to 162; sequence RFLIGAYSGLTSGLVPMYVGE. Residues 163–170 are Cytoplasmic-facing; it reads IAPTHLRG. The helical transmembrane segment at 171 to 191 threads the bilayer; that stretch reads ALGTLNQLAIVIGILVAQVLG. Glutamine 177 contributes to the D-glucose binding site. Topologically, residues 192–200 are extracellular; sequence LESMLGTAT. A helical transmembrane segment spans residues 201-221; it reads LWPLLLALTVLPALLQLILLP. The Cytoplasmic segment spans residues 222–286; it reads FCPESPRYLY…QLLGSRTHRQ (65 aa). Cysteine 223 is lipidated: S-palmitoyl cysteine. A Phosphoserine; by SGK1 modification is found at serine 274. Residues 287 to 307 traverse the membrane as a helical segment; that stretch reads PLIIAVVLQLSQQLSGINAVF. D-glucose contacts are provided by residues 298–299 and asparagine 304; that span reads QQ. Topologically, residues 308 to 322 are extracellular; the sequence is YYSTSIFESAGVGQP. The helical transmembrane segment at 323-343 threads the bilayer; the sequence is AYATIGAGVVNTVFTLVSVLL. A D-glucose-binding site is contributed by asparagine 333. The Cytoplasmic portion of the chain corresponds to 344-352; it reads VERAGRRTL. A helical membrane pass occupies residues 353 to 373; sequence HLLGLAGMCGCAILMTVALLL. Residues 374 to 384 are Extracellular-facing; that stretch reads LERVPAMSYVS. A helical membrane pass occupies residues 385 to 405; it reads IVAIFGFVAFFEIGPGPIPWF. Residues glutamate 396 and tryptophan 404 each coordinate D-glucose. Topologically, residues 406–416 are cytoplasmic; that stretch reads IVAELFSQGPR. The helical transmembrane segment at 417 to 437 threads the bilayer; sequence PAAMAVAGFSNWTCNFIVGMG. At 438 to 444 the chain is on the extracellular side; it reads FQYVADA. A helical transmembrane segment spans residues 445–465; that stretch reads MGPYVFLLFAVLLLGFFIFTF. Residues 466-508 lie on the Cytoplasmic side of the membrane; it reads LKVPETRGRTFDQISAAFRRTPSLLEQEVKPSTELEYLGPDEN. Threonine 486 is subject to Phosphothreonine. Serine 488 bears the Phosphoserine mark. The short motif at 489 to 490 is the Dileucine internalization motif element; sequence LL.

The protein belongs to the major facilitator superfamily. Sugar transporter (TC 2.A.1.1) family. Glucose transporter subfamily. In terms of assembly, binds to DAXX. Interacts via its N-terminus with SRFBP1. Interacts with NDUFA9. Interacts with TRARG1; the interaction is required for proper SLC2A4 recycling after insulin stimulation. Sumoylated. Post-translationally, palmitoylated. Palmitoylation by ZDHHC7 controls the insulin-dependent translocation of GLUT4 to the plasma membrane. Expressed in skeletal and cardiac muscles. Expressed in brown and white adipose tissues.

The protein resides in the cell membrane. It is found in the endomembrane system. It localises to the cytoplasm. The protein localises to the perinuclear region. It carries out the reaction D-glucose(out) = D-glucose(in). Its function is as follows. Insulin-regulated facilitative glucose transporter, which plays a key role in removal of glucose from circulation. Response to insulin is regulated by its intracellular localization: in the absence of insulin, it is efficiently retained intracellularly within storage compartments in muscle and fat cells. Upon insulin stimulation, translocates from these compartments to the cell surface where it transports glucose from the extracellular milieu into the cell. This chain is Solute carrier family 2, facilitated glucose transporter member 4, found in Mus musculus (Mouse).